The sequence spans 403 residues: Protein Bel-2 (403 aa).

The protein belongs to the spumavirus protein Bel-2 family.

The polypeptide is Protein Bel-2 (bel2) (Homo sapiens (Human)).